The sequence spans 338 residues: 5-dehydro-2-deoxygluconokinase (338 aa).

It belongs to the carbohydrate kinase PfkB family.

The catalysed reaction is 5-dehydro-2-deoxy-D-gluconate + ATP = 6-phospho-5-dehydro-2-deoxy-D-gluconate + ADP + H(+). It functions in the pathway polyol metabolism; myo-inositol degradation into acetyl-CoA; acetyl-CoA from myo-inositol: step 5/7. In terms of biological role, catalyzes the phosphorylation of 5-dehydro-2-deoxy-D-gluconate (2-deoxy-5-keto-D-gluconate or DKG) to 6-phospho-5-dehydro-2-deoxy-D-gluconate (DKGP). The protein is 5-dehydro-2-deoxygluconokinase of Mesomycoplasma hyopneumoniae (strain J / ATCC 25934 / NCTC 10110) (Mycoplasma hyopneumoniae).